The following is an 89-amino-acid chain: Putative regulatory protein Dalk_1931 (89 aa).

This sequence belongs to the RemA family.

In Desulfatibacillum aliphaticivorans, this protein is Putative regulatory protein Dalk_1931.